Consider the following 311-residue polypeptide: Acyl-CoA dehydrogenase IpdE2 (311 aa).

The FAD site is built by arginine 206 and glycine 273.

It belongs to the acyl-CoA dehydrogenase family. Heterotetramer composed of 2 IpdE1 subunits and 2 IpdE2 subunits. The cofactor is FAD.

The catalysed reaction is 3-[(3aS,4S,5R,7aS)-5-hydroxy-7a-methyl-1-oxo-octahydro-1H-inden-4-yl]propanoyl-CoA + A = (2E)-3-[(3aS,4S,5R,7aS)-5-hydroxy-7a-methyl-1-oxo-octahydro-1H-inden-4-yl]prop-2-enoyl-CoA + AH2. The protein operates within steroid metabolism; cholesterol degradation. Functionally, involved in cholesterol degradation. Catalyzes the dehydrogenation of 5OH-HIP-CoA to 5OH-HIPE-CoA. The sequence is that of Acyl-CoA dehydrogenase IpdE2 from Mycolicibacterium smegmatis (strain ATCC 700084 / mc(2)155) (Mycobacterium smegmatis).